A 620-amino-acid chain; its full sequence is Arginine--tRNA ligase (620 aa).

A 'HIGH' region motif is present at residues 147–157; that stretch reads ANPTGPIHIGG.

This sequence belongs to the class-I aminoacyl-tRNA synthetase family. In terms of assembly, monomer.

It is found in the cytoplasm. It carries out the reaction tRNA(Arg) + L-arginine + ATP = L-arginyl-tRNA(Arg) + AMP + diphosphate. The polypeptide is Arginine--tRNA ligase (Bifidobacterium longum (strain DJO10A)).